The following is a 434-amino-acid chain: Alpha-enolase (434 aa).

Residue S2 is modified to N-acetylserine. The residue at position 5 (K5) is an N6-acetyllysine. S27 carries the post-translational modification Phosphoserine. S40 is a Mg(2+) binding site. Residue Y44 is modified to Phosphotyrosine. Residue K60 is modified to N6-acetyllysine; alternate. N6-succinyllysine; alternate is present on K60. An N6-acetyllysine mark is found at K64 and K71. The residue at position 89 (K89) is an N6-acetyllysine; alternate. K89 carries the N6-succinyllysine; alternate modification. 2 positions are modified to N6-acetyllysine: K92 and K126. Substrate-binding residues include H158 and E167. 2 positions are modified to N6-acetyllysine: K193 and K199. The residue at position 202 (K202) is an N6-acetyllysine; alternate. K202 is covalently cross-linked (Glycyl lysine isopeptide (Lys-Gly) (interchain with G-Cter in SUMO2); alternate). E210 serves as the catalytic Proton donor. K228 and K233 each carry N6-acetyllysine; alternate. K228 is modified (N6-succinyllysine; alternate). Position 228 is an N6-(2-hydroxyisobutyryl)lysine; alternate (K228). K233 is modified (N6-malonyllysine; alternate). D245 is a Mg(2+) binding site. S254 carries the phosphoserine modification. K256 is modified (N6-acetyllysine). Phosphoserine occurs at positions 263 and 272. At K281 the chain carries N6-acetyllysine; alternate. K281 carries the N6-(2-hydroxyisobutyryl)lysine; alternate modification. K285 carries the post-translational modification N6-acetyllysine. A Phosphotyrosine modification is found at Y287. S291 is subject to Phosphoserine. E293 and D318 together coordinate Mg(2+). Residues E293 and D318 each contribute to the substrate site. N6-acetyllysine is present on residues K335 and K343. K343 serves as the catalytic Proton acceptor. Residues 370-373 and K394 each bind substrate; that span reads SHRS. The interval 405-434 is required for interaction with PLG; that stretch reads AKYNQLLRIEEELGSKAKFAGRNFRNPLAK. Residue K406 is modified to N6-acetyllysine. K420 is subject to N6-acetyllysine; alternate. At K420 the chain carries N6-succinyllysine; alternate. At K420 the chain carries N6-malonyllysine; alternate.

It belongs to the enolase family. Mammalian enolase is composed of 3 isozyme subunits, alpha, beta and gamma, which can form homodimers or heterodimers which are cell-type and development-specific. ENO1 interacts with PLG in the neuronal plasma membrane and promotes its activation. The C-terminal lysine is required for this binding. Interacts with ENO4 and PGAM2. Interacts with CMTM6. Requires Mg(2+) as cofactor. Post-translationally, ISGylated. Lysine 2-hydroxyisobutyrylation (Khib) by p300/EP300 activates the phosphopyruvate hydratase activity.

The protein localises to the cytoplasm. Its subcellular location is the cell membrane. The catalysed reaction is (2R)-2-phosphoglycerate = phosphoenolpyruvate + H2O. It functions in the pathway carbohydrate degradation; glycolysis; pyruvate from D-glyceraldehyde 3-phosphate: step 4/5. Glycolytic enzyme the catalyzes the conversion of 2-phosphoglycerate to phosphoenolpyruvate. In addition to glycolysis, involved in various processes such as growth control, hypoxia tolerance and allergic responses. May also function in the intravascular and pericellular fibrinolytic system due to its ability to serve as a receptor and activator of plasminogen on the cell surface of several cell-types such as leukocytes and neurons. Stimulates immunoglobulin production. The polypeptide is Alpha-enolase (ENO1) (Macaca fascicularis (Crab-eating macaque)).